The sequence spans 301 residues: GTPase Era (301 aa).

Residues Lys-6–Ile-173 form the Era-type G domain. Residues Gly-14–Ser-21 are G1. Gly-14 to Ser-21 contacts GTP. Residues Gln-40–Asn-44 form a G2 region. The interval Asp-61–Gly-64 is G3. Residues Asp-61 to Ile-65 and Asn-123 to Asp-126 contribute to the GTP site. The interval Asn-123 to Asp-126 is G4. The tract at residues Ile-152–Ala-154 is G5. The KH type-2 domain maps to Thr-204–Lys-282.

The protein belongs to the TRAFAC class TrmE-Era-EngA-EngB-Septin-like GTPase superfamily. Era GTPase family. Monomer.

The protein localises to the cytoplasm. Its subcellular location is the cell membrane. Its function is as follows. An essential GTPase that binds both GDP and GTP, with rapid nucleotide exchange. Plays a role in 16S rRNA processing and 30S ribosomal subunit biogenesis and possibly also in cell cycle regulation and energy metabolism. The protein is GTPase Era of Listeria innocua serovar 6a (strain ATCC BAA-680 / CLIP 11262).